The sequence spans 366 residues: MKRRDVGSLFAGARVAESVPLAPLTTLRVGPVARTLVTCDTTDQVVGVLRELDDRARNGDCGPVLVFAGGSNVVIGDALADLTVVRVANDRVTIDGNLVRAEAGAVWDEVVVAAIERGLGGLECLSGIPGSAGATPVQNVGAYGVEVSDVITRVRLLDRSTGEVSWVPAADLSFGYRTSVLKQADGLALPAVVLEVEFALDASGRSAPLRYGELTAALGMNSGERGEPRAVRDAVLALRARKGMVLDAADHDTWSVGSFFTNPVVAPEIYERLAAQTGESVPHYPAPDGVKLAAGWLLERAGFGKGYPGDPHARCRLSSKHALALTNRGGATAADVMVLARTVRDGVRDVFGITLKPEPVLVGCAL.

One can recognise an FAD-binding PCMH-type domain in the interval 29 to 203 (VGPVARTLVT…LEVEFALDAS (175 aa)). Arg177 is a catalytic residue. Catalysis depends on Ser258, which acts as the Proton donor. Glu358 is an active-site residue.

The protein belongs to the MurB family. FAD serves as cofactor.

The protein localises to the cytoplasm. The enzyme catalyses UDP-N-acetyl-alpha-D-muramate + NADP(+) = UDP-N-acetyl-3-O-(1-carboxyvinyl)-alpha-D-glucosamine + NADPH + H(+). Its pathway is cell wall biogenesis; peptidoglycan biosynthesis. Its function is as follows. Cell wall formation. In Mycobacterium marinum (strain ATCC BAA-535 / M), this protein is UDP-N-acetylenolpyruvoylglucosamine reductase.